The following is an 802-amino-acid chain: DNA mismatch repair protein MutS (802 aa).

Residue 617 to 624 (GPNMGGKS) participates in ATP binding.

The protein belongs to the DNA mismatch repair MutS family.

This protein is involved in the repair of mismatches in DNA. It is possible that it carries out the mismatch recognition step. This protein has a weak ATPase activity. The polypeptide is DNA mismatch repair protein MutS (Buchnera aphidicola subsp. Acyrthosiphon pisum (strain 5A)).